We begin with the raw amino-acid sequence, 207 residues long: Venom allergen 5 (207 aa).

Cystine bridges form between cysteine 4-cysteine 16, cysteine 8-cysteine 105, cysteine 29-cysteine 97, and cysteine 173-cysteine 190. The region spanning valine 48–tyrosine 192 is the SCP domain.

It belongs to the CRISP family. Venom allergen 5-like subfamily. As to quaternary structure, monomer. As to expression, expressed by the venom gland.

The protein localises to the secreted. This Polybia scutellaris rioplatensis (Camoati) protein is Venom allergen 5.